We begin with the raw amino-acid sequence, 490 residues long: Katanin p60 ATPase-containing subunit A-like 1 (490 aa).

At Met-1 the chain carries N-acetylmethionine. The interval 95-184 (DPAVWPPPVP…DGEMPKFDGA (90 aa)) is disordered. A compositionally biased stretch (basic and acidic residues) spans 116-127 (PNREVRPLRKEM). Low complexity predominate over residues 128 to 139 (AGVGARGPVGRA). Residues 143–169 (SKSEKPSTSRDKDCRARGRDDKGRKNM) show a composition bias toward basic and acidic residues. Ser-174 is modified (phosphoserine). Position 248-255 (248-255 (GPPGTGKT)) interacts with ATP.

The protein belongs to the AAA ATPase family. Katanin p60 subunit A1 subfamily. A-like 1 sub-subfamily. As to quaternary structure, interacts with KATNB1 and KATNBL1.

It localises to the cytoplasm. The protein localises to the cytoskeleton. It is found in the spindle pole. Its subcellular location is the spindle. The enzyme catalyses n ATP + n H2O + a microtubule = n ADP + n phosphate + (n+1) alpha/beta tubulin heterodimers.. In terms of biological role, regulates microtubule dynamics in Sertoli cells, a process that is essential for spermiogenesis and male fertility. Severs microtubules in an ATP-dependent manner, promoting rapid reorganization of cellular microtubule arrays. Has microtubule-severing activity in vitro. The polypeptide is Katanin p60 ATPase-containing subunit A-like 1 (Papio anubis (Olive baboon)).